A 561-amino-acid polypeptide reads, in one-letter code: Lengsin (561 aa).

Disordered regions lie at residues 1-78 and 91-112; these read MNDE…WHNA and SLPSAGAPDAEFNPNTDHTRDN. Residues 26 to 37 show a composition bias toward basic residues; the sequence is NKLKRTRRKVTK. Positions 50 to 63 are enriched in polar residues; that stretch reads MANSREMSRNQTAD. The 95-residue stretch at 135-229 folds into the GS beta-grasp domain; the sequence is NHLQFVRFEA…VICDTFTVTG (95 aa). The GS catalytic domain occupies 236 to 561; it reads PRYIAKRQLR…EGNKFLEYFI (326 aa).

The protein belongs to the glutamine synthetase family. As to quaternary structure, dodecamer. Interacts with BFSP2 and VIM. As to expression, expressed in lens.

May act as a component of the cytoskeleton or as a chaperone for the reorganization of intermediate filament proteins during terminal differentiation in the lens. Does not seem to have enzymatic activity. The polypeptide is Lengsin (Lgsn) (Rattus norvegicus (Rat)).